Here is a 173-residue protein sequence, read N- to C-terminus: Photosystem I assembly protein Ycf3 (173 aa).

TPR repeat units lie at residues 35 to 68 (AYIY…EENK), 72 to 105 (GETL…NPKQ), and 120 to 153 (GRYA…YPGG).

This sequence belongs to the Ycf3 family.

Its subcellular location is the cellular thylakoid membrane. Its function is as follows. Essential for the assembly of the photosystem I (PSI) complex. May act as a chaperone-like factor to guide the assembly of the PSI subunits. The chain is Photosystem I assembly protein Ycf3 from Prochlorococcus marinus (strain MIT 9215).